The chain runs to 186 residues: MAAFTCTSRPPISLRSETRIVSSSPSASSLSSRRMFAVLPESSGLRIRLSLSPASLTSIHQPRVSRLRRAVVCEAQETTTDIQVVNDSTWDSLVLKATGPVVVDFWAPWCGPCKMIDPLVNDLAQHYTGKIKFYKLNTDESPNTPGQYGVRSIPTIMIFVGGEKKDTIIGAVPKTTLTSSLDKFLP.

The transit peptide at 1 to 72 (MAAFTCTSRP…RVSRLRRAVV (72 aa)) directs the protein to the chloroplast. Residues 73 to 186 (CEAQETTTDI…LTSSLDKFLP (114 aa)) form the Thioredoxin domain. Catalysis depends on nucleophile residues cysteine 110 and cysteine 113. Residues cysteine 110 and cysteine 113 are joined by a disulfide bond.

This sequence belongs to the thioredoxin family. Plant M-type subfamily. Interacts with G6PD1 and G6PD4. Interacts with PGL3.

The protein localises to the plastid. It localises to the chloroplast stroma. Thiol-disulfide oxidoreductase that may participate in various redox reactions. May activate NADP-malate dehydrogenase. The sequence is that of Thioredoxin M2, chloroplastic from Arabidopsis thaliana (Mouse-ear cress).